The chain runs to 234 residues: Putative ankyrin repeat protein RF_0063 (234 aa).

2 ANK repeats span residues 149–180 (NNNTALHYAVDKNLEKLSISLINKMSIETISI) and 184–213 (YNNTALHYATDNGLEVISWFLINNMTQKAL).

This Rickettsia felis (strain ATCC VR-1525 / URRWXCal2) (Rickettsia azadi) protein is Putative ankyrin repeat protein RF_0063.